Reading from the N-terminus, the 1018-residue chain is 2-oxoglutarate dehydrogenase-like, mitochondrial (1018 aa).

Ca(2+) contacts are provided by His-138, Asp-151, and Asp-153. 5 residues coordinate thiamine diphosphate: Arg-307, Asp-406, Asn-439, Ile-441, and Gln-671. Mg(2+) contacts are provided by Asp-406, Asn-439, and Ile-441.

It belongs to the alpha-ketoglutarate dehydrogenase family. In terms of assembly, the OGDHC complex comprises multiple copies of three catalytic enzyme components, the 2-oxoglutarate dehydrogenase (OGDH/E1), the dihydrolipoamide dehydrogenase (DLST/E2) and the dihydrolipoamide dehydrogenase (DLD/E3). OGDHL/E1-like isoenzyme may replace OGDH in the OGDHC complex in the brain. Requires thiamine diphosphate as cofactor. The cofactor is Mg(2+).

It is found in the mitochondrion matrix. It carries out the reaction N(6)-[(R)-lipoyl]-L-lysyl-[protein] + 2-oxoglutarate + H(+) = N(6)-[(R)-S(8)-succinyldihydrolipoyl]-L-lysyl-[protein] + CO2. In terms of biological role, 2-oxoglutarate dehydrogenase (E1-like) component of the 2-oxoglutarate dehydrogenase multienzyme complex (OGDHC) which mediates the decarboxylation of alpha-ketoglutarate in the tricarboxylic acid cycle. The OGDHC complex catalyzes the overall conversion of 2-oxoglutarate to succinyl-CoA and CO(2) while reducing NAD(+) to NADH. The OGDHC complex is mainly active in the mitochondrion. Involved in the inhibition of cell proliferation and in apoptosis. The polypeptide is 2-oxoglutarate dehydrogenase-like, mitochondrial (ogdhl) (Xenopus laevis (African clawed frog)).